The chain runs to 348 residues: Phosphatidylinositol 3,4,5-trisphosphate 3-phosphatase ptn1 (348 aa).

The region spanning 18 to 189 (EKVNRSFAYL…YYIEILKQFP (172 aa)) is the Phosphatase tensin-type domain. Cys129 (phosphocysteine intermediate) is an active-site residue.

The protein localises to the cytoplasmic vesicle. The catalysed reaction is a 1,2-diacyl-sn-glycero-3-phospho-(1D-myo-inositol-3,4,5-trisphosphate) + H2O = a 1,2-diacyl-sn-glycero-3-phospho-(1D-myo-inositol-4,5-bisphosphate) + phosphate. The enzyme catalyses 1,2-dioctanoyl-sn-glycero-3-phospho-(1D-myo-inositol-3,4,5-trisphosphate) + H2O = 1,2-dioctanoyl-sn-glycero-3-phospho-(1D-myo-inositol-4,5-bisphosphate) + phosphate. It catalyses the reaction 1,2-dihexadecanoyl-sn-glycero-3-phospho-(1D-myo-inositol-3,4,5-trisphosphate) + H2O = 1,2-dihexadecanoyl-sn-glycero-3-phospho-(1D-myo-inositol-4,5-bisphosphate) + phosphate. Its function is as follows. Acts as a phosphoinositide 3-phosphatase and regulates PtdIns(3,4,5)P3 levels. This chain is Phosphatidylinositol 3,4,5-trisphosphate 3-phosphatase ptn1 (ptn1), found in Schizosaccharomyces pombe (strain 972 / ATCC 24843) (Fission yeast).